Consider the following 1006-residue polypeptide: UPF0182 protein Arth_2749 (1006 aa).

7 helical membrane-spanning segments follow: residues 18–38 (GALTPTLIVVALVVVGFIFFA), 64–84 (IIIFLAGFALMFVAMFYAIRI), 115–135 (VVMIGLPVLFGLFAGSAAASQ), 168–188 (FLGFVTGFLISVVVVAGIAGI), 211–231 (QIHLAVTGAVFLLLLGVNFWL), 260–280 (SILAVAAALVAILFIVAAVIG), and 287–307 (IGTAMLVITSILAGGVYPWVI). Disordered stretches follow at residues 490-519 (GAPEGSPHREQDRPAGKEGDGETQYTFTGN), 896-923 (KAGDFANNGQTPPPAAGGSTPPATGGTD), and 975-1006 (LGSEGASPTPGATTAPTATPSAAATPSPSPSN). The span at 495 to 509 (SPHREQDRPAGKEGD) shows a compositional bias: basic and acidic residues. 2 stretches are compositionally biased toward low complexity: residues 911–923 (AGGSTPPATGGTD) and 979–1000 (GASPTPGATTAPTATPSAAATP).

The protein belongs to the UPF0182 family.

The protein resides in the cell membrane. In Arthrobacter sp. (strain FB24), this protein is UPF0182 protein Arth_2749.